Reading from the N-terminus, the 315-residue chain is Cytochrome f (315 aa).

A signal peptide spans 1-36 (MKQSLLSVLTKKSLRLLAALFLVVTSVFSLPQAAQA). 4 residues coordinate heme: Phe37, Cys57, Cys60, and His61. Residues 281-301 (IKWLMVFFSAIMISQTLLVLK) traverse the membrane as a helical segment.

Belongs to the cytochrome f family. As to quaternary structure, the 4 large subunits of the cytochrome b6-f complex are cytochrome b6, subunit IV (17 kDa polypeptide, PetD), cytochrome f and the Rieske protein, while the 4 small subunits are PetG, PetL, PetM and PetN. The complex functions as a dimer. Requires heme as cofactor.

The protein localises to the cellular thylakoid membrane. Component of the cytochrome b6-f complex, which mediates electron transfer between photosystem II (PSII) and photosystem I (PSI), cyclic electron flow around PSI, and state transitions. The polypeptide is Cytochrome f (Acaryochloris marina (strain MBIC 11017)).